Reading from the N-terminus, the 187-residue chain is Interferon alpha-3 (187 aa).

A signal peptide spans 1 to 23 (MALPCSFSVALVLLSCHSLCCLA). Cystine bridges form between cysteine 24–cysteine 122 and cysteine 52–cysteine 160. N-linked (GlcNAc...) asparagine glycosylation is found at asparagine 94 and asparagine 101.

This sequence belongs to the alpha/beta interferon family.

The protein localises to the secreted. Produced by macrophages, IFN-alpha have antiviral activities. Interferon stimulates the production of two enzymes: a protein kinase and an oligoadenylate synthetase. The chain is Interferon alpha-3 from Canis lupus familiaris (Dog).